Here is a 482-residue protein sequence, read N- to C-terminus: Lipoamide acyltransferase component of branched-chain alpha-keto acid dehydrogenase complex, mitochondrial (482 aa).

Residues 1 to 61 constitute a mitochondrion transit peptide; sequence MAAVRMLRTW…HFLKTTAALR (61 aa). In terms of domain architecture, Lipoyl-binding spans 64-139; it reads VVQFKLSDIG…YVGKPLVDIE (76 aa). Lysine 105 bears the N6-lipoyllysine mark. Lysine 133 bears the N6-succinyllysine mark. A critical for association with PPM1K region spans residues 145 to 160; sequence DSEEDVVETPAVSHDE. The segment at 147 to 168 is disordered; the sequence is EEDVVETPAVSHDEHTHQEIKG. Positions 157-168 are enriched in basic and acidic residues; it reads SHDEHTHQEIKG. The Peripheral subunit-binding (PSBD) domain occupies 172-209; the sequence is LATPAVRRLAMENNIKLSEVVGSGKDGRILKEDILNYL. Position 196 is an N6-acetyllysine; alternate (lysine 196). Residue lysine 196 is modified to N6-succinyllysine; alternate. Lysine 202 carries the post-translational modification N6-acetyllysine. Phosphoserine is present on serine 220. N6-acetyllysine is present on residues lysine 243 and lysine 250. Lysine 261 is modified (N6-succinyllysine). Lysine 289 bears the N6-acetyllysine; alternate mark. Lysine 289 carries the N6-succinyllysine; alternate modification. Arginine 291 is a CoA binding site. N6-acetyllysine is present on residues lysine 295 and lysine 304. CoA contacts are provided by serine 306, aspartate 349, glutamine 378, serine 399, asparagine 400, serine 403, glycine 424, and isoleucine 426. The residue at position 435 (lysine 435) is an N6-acetyllysine. N6-acetyllysine; alternate is present on lysine 440. Residue lysine 440 is modified to N6-succinyllysine; alternate. Catalysis depends on residues histidine 452 and aspartate 456.

It belongs to the 2-oxoacid dehydrogenase family. Forms a 24-polypeptide structural core with octahedral symmetry that represents the E2 component of the branched-chain alpha-ketoacid dehydrogenase (BCKDH) complex. The BCKDH complex is composed of three major building blocks E1, E2 and E3. It is organized around E2, a 24-meric cubic core composed of DBT, to which are associated 6 to 12 copies of E1, and approximately 6 copies of the dehydrogenase E3, a DLD dimer. Interacts with PPM1K with a 24:1 stoichiometry; the N-terminal region (residues 49-61) of PPM1K and C-terminal linker of the lipoyl domain of DBT/E2 (residues 145-160) are critical for this interaction whereas the lipoyl prosthetic group is dispensable. This interaction requires colocalization in mitochondria. PPM1K competes with BCKDK for binding to DBT; this interaction is modulated by branched-chain alpha-keto acids (BCKAs). At steady state, BCKDH holoenzyme preferentially binds BCKDK and BCKDHA is phosphorylated. In response to high levels of BCKAs, BCKDK is replaced by PPM1K leading to BCKDHA dephosphorylation. (R)-lipoate serves as cofactor.

The protein localises to the mitochondrion matrix. It carries out the reaction N(6)-[(R)-dihydrolipoyl]-L-lysyl-[protein] + 2-methylpropanoyl-CoA = N(6)-[(R)-S(8)-2-methylpropanoyldihydrolipoyl]-L-lysyl-[protein] + CoA. Its function is as follows. The branched-chain alpha-keto dehydrogenase complex catalyzes the overall conversion of alpha-keto acids to acyl-CoA and CO(2). It contains multiple copies of three enzymatic components: branched-chain alpha-keto acid decarboxylase (E1), lipoamide acyltransferase (E2) and lipoamide dehydrogenase (E3). Within this complex, the catalytic function of this enzyme is to accept, and to transfer to coenzyme A, acyl groups that are generated by the branched-chain alpha-keto acid decarboxylase component. This is Lipoamide acyltransferase component of branched-chain alpha-keto acid dehydrogenase complex, mitochondrial from Homo sapiens (Human).